The following is a 333-amino-acid chain: Anthranilate phosphoribosyltransferase (333 aa).

Residues Gly-80, 83–84, Ser-88, 90–93, 108–116, and Ser-120 each bind 5-phospho-alpha-D-ribose 1-diphosphate; these read GD, NIST, and KHGNRSVSS. Gly-80 serves as a coordination point for anthranilate. Position 92 (Ser-92) interacts with Mg(2+). Asn-111 contributes to the anthranilate binding site. Arg-166 contributes to the anthranilate binding site. Residues Asp-224 and Glu-225 each contribute to the Mg(2+) site.

This sequence belongs to the anthranilate phosphoribosyltransferase family. Homodimer. The cofactor is Mg(2+).

The catalysed reaction is N-(5-phospho-beta-D-ribosyl)anthranilate + diphosphate = 5-phospho-alpha-D-ribose 1-diphosphate + anthranilate. Its pathway is amino-acid biosynthesis; L-tryptophan biosynthesis; L-tryptophan from chorismate: step 2/5. Catalyzes the transfer of the phosphoribosyl group of 5-phosphorylribose-1-pyrophosphate (PRPP) to anthranilate to yield N-(5'-phosphoribosyl)-anthranilate (PRA). This chain is Anthranilate phosphoribosyltransferase, found in Yersinia pseudotuberculosis serotype O:1b (strain IP 31758).